The sequence spans 240 residues: NAD(P)H-hydrate epimerase (240 aa).

In terms of domain architecture, YjeF N-terminal spans 15–224; it reads AQEIDAELMG…SYNLKLPCYP (210 aa). 66–70 lines the (6S)-NADPHX pocket; the sequence is NQGGD. K(+) is bound by residues Q67 and D129. (6S)-NADPHX contacts are provided by residues 133–139 and D162; that span reads GFSFHSE. S165 serves as a coordination point for K(+).

Belongs to the NnrE/AIBP family. Requires K(+) as cofactor.

It is found in the cytoplasm. The protein localises to the mitochondrion. The enzyme catalyses (6R)-NADHX = (6S)-NADHX. The catalysed reaction is (6R)-NADPHX = (6S)-NADPHX. Its function is as follows. Catalyzes the epimerization of the S- and R-forms of NAD(P)HX, a damaged form of NAD(P)H that is a result of enzymatic or heat-dependent hydration. This is a prerequisite for the S-specific NAD(P)H-hydrate dehydratase to allow the repair of both epimers of NAD(P)HX. The polypeptide is NAD(P)H-hydrate epimerase (Puccinia graminis f. sp. tritici (strain CRL 75-36-700-3 / race SCCL) (Black stem rust fungus)).